The sequence spans 204 residues: Proteasome subunit beta (204 aa).

Positions 1 to 8 (MDDKILEG) are cleaved as a propeptide — removed in mature form; by autocatalysis. Thr9 (nucleophile) is an active-site residue.

The protein belongs to the peptidase T1B family. As to quaternary structure, the 20S proteasome core is composed of 14 alpha and 14 beta subunits that assemble into four stacked heptameric rings, resulting in a barrel-shaped structure. The two inner rings, each composed of seven catalytic beta subunits, are sandwiched by two outer rings, each composed of seven alpha subunits. The catalytic chamber with the active sites is on the inside of the barrel. Has a gated structure, the ends of the cylinder being occluded by the N-termini of the alpha-subunits. Is capped at one or both ends by the proteasome regulatory ATPase, PAN.

Its subcellular location is the cytoplasm. The catalysed reaction is Cleavage of peptide bonds with very broad specificity.. Its activity is regulated as follows. The formation of the proteasomal ATPase PAN-20S proteasome complex, via the docking of the C-termini of PAN into the intersubunit pockets in the alpha-rings, triggers opening of the gate for substrate entry. Interconversion between the open-gate and close-gate conformations leads to a dynamic regulation of the 20S proteasome proteolysis activity. Functionally, component of the proteasome core, a large protease complex with broad specificity involved in protein degradation. In Methanobrevibacter smithii (strain ATCC 35061 / DSM 861 / OCM 144 / PS), this protein is Proteasome subunit beta.